Consider the following 384-residue polypeptide: Intraflagellar transport protein 46 homolog (384 aa).

2 disordered regions span residues 52–151 (VNAE…PADY) and 358–384 (SATD…LTLD). Over residues 87-99 (EKLEEDTKRKKEP) the composition is skewed to basic and acidic residues. Positions 110 to 138 (DEEEDEDDDDDDDDDDSDDTESDEEEEEP) are enriched in acidic residues. Residues 358–374 (SATDGQKSDTPPASRSA) are compositionally biased toward polar residues.

The protein belongs to the IFT46 family.

Its subcellular location is the cytoplasm. The protein localises to the cytoskeleton. It is found in the cilium basal body. It localises to the cell projection. The protein resides in the cilium. Forms part of a complex involved in intraflagellar transport (IFT), the bi-directional movement of particles required for the assembly, maintenance and functioning of primary cilia. Plays a role in early embryonic development. This Danio rerio (Zebrafish) protein is Intraflagellar transport protein 46 homolog.